The primary structure comprises 253 residues: Bridging integrator 3 (253 aa).

The 224-residue stretch at 9 to 232 (GQPKKQIVSK…LDQPGHSDEQ (224 aa)) folds into the BAR domain. Coiled-coil stretches lie at residues 16–57 (VSKT…AMSK) and 120–151 (SLNMAVKRREQALQDYGRLQAKVEKYEEKEKT). A disordered region spans residues 222–241 (QLDQPGHSDEQRERENETKL). Positions 227–241 (GHSDEQRERENETKL) are enriched in basic and acidic residues.

The protein resides in the cytoplasm. Its subcellular location is the cytoskeleton. Involved in cytokinesis and septation where it has a role in the localization of F-actin. The polypeptide is Bridging integrator 3 (Bin3) (Mus musculus (Mouse)).